A 226-amino-acid chain; its full sequence is UPF0758 protein GWCH70_2550 (226 aa).

The region spanning 104–226 (VIRSPEDGAK…FVSLKEKGYV (123 aa)) is the MPN domain. Zn(2+) is bound by residues histidine 175, histidine 177, and aspartate 188. The JAMM motif signature appears at 175 to 188 (HNHPSGDPTPSRED).

It belongs to the UPF0758 family.

This Geobacillus sp. (strain WCH70) protein is UPF0758 protein GWCH70_2550.